Here is a 201-residue protein sequence, read N- to C-terminus: Imidazoleglycerol-phosphate dehydratase (201 aa).

Belongs to the imidazoleglycerol-phosphate dehydratase family.

It is found in the cytoplasm. It carries out the reaction D-erythro-1-(imidazol-4-yl)glycerol 3-phosphate = 3-(imidazol-4-yl)-2-oxopropyl phosphate + H2O. It participates in amino-acid biosynthesis; L-histidine biosynthesis; L-histidine from 5-phospho-alpha-D-ribose 1-diphosphate: step 6/9. The chain is Imidazoleglycerol-phosphate dehydratase from Prochlorococcus marinus subsp. pastoris (strain CCMP1986 / NIES-2087 / MED4).